We begin with the raw amino-acid sequence, 363 residues long: Probable transglycosylase BTH_I0986 (363 aa).

The protein belongs to the glycosyltransferase group 1 family. Glycosyltransferase 4 subfamily.

Probably a transglycosylase. Probably involved in synthesis of the outer membrane receptor for a cellular contact-dependent growth inhibition (CDI) system. In Burkholderia thailandensis (strain ATCC 700388 / DSM 13276 / CCUG 48851 / CIP 106301 / E264), this protein is Probable transglycosylase BTH_I0986.